A 151-amino-acid polypeptide reads, in one-letter code: Myosin light polypeptide 6 (151 aa).

C2 bears the N-acetylcysteine mark. The region spanning 7–42 is the EF-hand 1 domain; the sequence is DQTAEFKEAFQLFDRTGDGKILYSQCGDVMRALGQN. Residue S57 is modified to Phosphoserine. K81 carries the post-translational modification N6-acetyllysine. 2 consecutive EF-hand domains span residues 84–119 and 119–151; these read GTYEDYVEGLRVFDKEGNGTVMGAEIRHVLVTLGEK and KMTEEEVEMLVAGHEDSNGCINYEELLRMVLNG.

As to quaternary structure, myosin is a hexamer of 2 heavy chains and 4 light chains. Interacts with SPATA6.

Functionally, regulatory light chain of myosin. Does not bind calcium. The chain is Myosin light polypeptide 6 (Myl6) from Rattus norvegicus (Rat).